The sequence spans 439 residues: MVPSSPRALFLLLLILACPEPRASQNCLSKQQLLSAIRQLQQLLKGQETRFAEGIRHMKSRLAALQNSVGRVGPDALPVSCPALNTPADGRKFGSKYLVDHEVHFTCNPGFRLVGPSSVVCLPNGTWTGEQPHCRGISECSSQPCQNGGTCVEGVNQYRCICPPGRTGNRCQHQAQTAAPEGSVAGDSAFSRAPRCAQVERAQHCSCEAGFHLSGAAGDSVCQDVNECELYGQEGRPRLCMHACVNTPGSYRCTCPGGYRTLADGKSCEDVDECVGLQPVCPQGTTCINTGGSFQCVSPECPEGSGNVSYVKTSPFQCERNPCPMDSRPCRHLPKTISFHYLSLPSNLKTPITLFRMATASAPGRAGPNSLRFGIVGGNSRGHFVMQRSDRQTGDLILVQNLEGPQTLEVDVDMSEYLDRSFQANHVSKVTIFVSPYDF.

Positions 1 to 24 (MVPSSPRALFLLLLILACPEPRAS) are cleaved as a signal peptide. The stretch at 28–53 (LSKQQLLSAIRQLQQLLKGQETRFAE) forms a coiled coil. In terms of domain architecture, Sushi spans 79 to 136 (VSCPALNTPADGRKFGSKYLVDHEVHFTCNPGFRLVGPSSVVCLPNGTWTGEQPHCRG). 11 cysteine pairs are disulfide-bonded: Cys81-Cys121, Cys107-Cys134, Cys140-Cys151, Cys145-Cys160, Cys162-Cys171, Cys228-Cys244, Cys240-Cys253, Cys255-Cys268, Cys274-Cys287, Cys281-Cys296, and Cys301-Cys318. Asn124 is a glycosylation site (N-linked (GlcNAc...) asparagine). The 37-residue stretch at 136 to 172 (GISECSSQPCQNGGTCVEGVNQYRCICPPGRTGNRCQ) folds into the EGF-like 1; calcium-binding domain. The EGF-like 2; calcium-binding domain maps to 224–269 (DVNECELYGQEGRPRLCMHACVNTPGSYRCTCPGGYRTLADGKSCE). The 50-residue stretch at 270–319 (DVDECVGLQPVCPQGTTCINTGGSFQCVSPECPEGSGNVSYVKTSPFQCE) folds into the EGF-like 3; calcium-binding domain. A glycan (N-linked (GlcNAc...) asparagine) is linked at Asn307.

It belongs to the fibulin family. Interacts with heparin, FBLN1, FN1 and DSPP. Preferentially binds dental mesenchyme cells and odontoblasts but not dental epithelial cells or nondental cells. Binding requires a heparan sulfate-containing receptor on the cell surface as well as an integrin. N-glycosylated.

Its subcellular location is the secreted. The protein resides in the extracellular space. The protein localises to the extracellular matrix. In terms of biological role, an adhesion molecule that interacts with extracellular matrix molecules in developing teeth and may play important roles in differentiation and maintenance of odontoblasts as well as in dentin formation. The protein is Fibulin-7 (FBLN7) of Homo sapiens (Human).